The following is a 387-amino-acid chain: 3-ketoacyl-CoA thiolase FadA (387 aa).

The Acyl-thioester intermediate role is filled by C91. Catalysis depends on proton acceptor residues H343 and C373.

It belongs to the thiolase-like superfamily. Thiolase family. Heterotetramer of two alpha chains (FadB) and two beta chains (FadA).

The protein localises to the cytoplasm. It catalyses the reaction an acyl-CoA + acetyl-CoA = a 3-oxoacyl-CoA + CoA. It participates in lipid metabolism; fatty acid beta-oxidation. Catalyzes the final step of fatty acid oxidation in which acetyl-CoA is released and the CoA ester of a fatty acid two carbons shorter is formed. Involved in the aerobic and anaerobic degradation of long-chain fatty acids. The sequence is that of 3-ketoacyl-CoA thiolase FadA (fadA) from Escherichia coli (strain K12).